The sequence spans 104 residues: Large ribosomal subunit protein uL23 (104 aa).

This sequence belongs to the universal ribosomal protein uL23 family. In terms of assembly, part of the 50S ribosomal subunit. Contacts protein L29, and trigger factor when it is bound to the ribosome.

Its function is as follows. One of the early assembly proteins it binds 23S rRNA. One of the proteins that surrounds the polypeptide exit tunnel on the outside of the ribosome. Forms the main docking site for trigger factor binding to the ribosome. The protein is Large ribosomal subunit protein uL23 of Ralstonia pickettii (strain 12J).